Consider the following 488-residue polypeptide: Retinoic acid receptor RXR-alpha (488 aa).

The modulating stretch occupies residues 1–160 (MSSAAMDTKH…GAMASFTKHI (160 aa)). A Glycyl lysine isopeptide (Lys-Gly) (interchain with G-Cter in SUMO) cross-link involves residue lysine 134. A DNA-binding region (nuclear receptor) is located at residues 158–233 (KHICAICGDR…MGMKREAVQE (76 aa)). Residues cysteine 161, cysteine 164, cysteine 178, and cysteine 181 each coordinate Zn(2+). Residues 161–181 (CAICGDRSSGKHYGVYSCEGC) form an NR C4-type zinc finger. A nuclear localization signal region spans residues 186–191 (KRTVRK). Positions 197, 203, 213, and 216 each coordinate Zn(2+). The NR C4-type zinc finger occupies 197-216 (CRDSKDCMIDKRQRNRCQYC). A hinge region spans residues 227–250 (KREAVQEERQRGKERNENEVESSN). A compositionally biased stretch (basic and acidic residues) spans 232–244 (QEERQRGKERNEN). The disordered stretch occupies residues 232–256 (QEERQRGKERNENEVESSNSANEDM). The region spanning 253 to 484 (NEDMPVEKIL…TFLMEMLEAP (232 aa)) is the NR LBD domain. Positions 342 and 353 each coordinate 9-cis-retinoate. All-trans-retinoate is bound by residues arginine 342 and alanine 353. The tract at residues 374–394 (RVLTELVSKMRDMQMDKTELG) is required for nuclear export. The interval 473-484 (IDTFLMEMLEAP) is AF-2.

The protein belongs to the nuclear hormone receptor family. NR2 subfamily. Homodimer. Heterodimer; with a rar molecule. Binds DNA preferentially as a rar/rxr heterodimer. Interacts with coactivator ncoa3 and with senp6. In terms of processing, sumoylated on Lys-134; which negatively regulates transcriptional activity. Desumoylated specifically by SENP6.

It is found in the nucleus. Its function is as follows. Receptor for retinoic acid that acts as a transcription factor. Forms homo- or heterodimers with retinoic acid receptors (rars) and binds to target response elements in response to their ligands, all-trans or 9-cis retinoic acid, to regulate gene expression in various biological processes. The rar/rxr heterodimers bind to the retinoic acid response elements (RARE) composed of tandem 5'-AGGTCA-3' sites known as DR1-DR5 to regulate transcription. The high affinity ligand for rxrs is 9-cis retinoic acid. In the absence of ligand, the rar/rxr heterodimers associate with a multiprotein complex containing transcription corepressors that induce histone deacetylation, chromatin condensation and transcriptional suppression. On ligand binding, the corepressors dissociate from the receptors and coactivators are recruited leading to transcriptional activation. This is Retinoic acid receptor RXR-alpha (rxra) from Xenopus laevis (African clawed frog).